Here is a 257-residue protein sequence, read N- to C-terminus: 3-methyl-2-oxobutanoate hydroxymethyltransferase (257 aa).

2 residues coordinate Mg(2+): Asp-42 and Asp-86. 3-methyl-2-oxobutanoate contacts are provided by residues 42 to 43, Asp-86, and Lys-116; that span reads DS. Glu-118 contacts Mg(2+). Glu-185 acts as the Proton acceptor in catalysis.

The protein belongs to the PanB family. Homodecamer; pentamer of dimers. It depends on Mg(2+) as a cofactor.

Its subcellular location is the cytoplasm. The enzyme catalyses 3-methyl-2-oxobutanoate + (6R)-5,10-methylene-5,6,7,8-tetrahydrofolate + H2O = 2-dehydropantoate + (6S)-5,6,7,8-tetrahydrofolate. The protein operates within cofactor biosynthesis; (R)-pantothenate biosynthesis; (R)-pantoate from 3-methyl-2-oxobutanoate: step 1/2. In terms of biological role, catalyzes the reversible reaction in which hydroxymethyl group from 5,10-methylenetetrahydrofolate is transferred onto alpha-ketoisovalerate to form ketopantoate. The sequence is that of 3-methyl-2-oxobutanoate hydroxymethyltransferase from Prochlorococcus marinus (strain MIT 9215).